An 876-amino-acid chain; its full sequence is Leucine--tRNA ligase (876 aa).

Residues 43–53 (PYPSGRIHMGH) carry the 'HIGH' region motif. The 'KMSKS' region signature appears at 632-636 (KMSKS). Residue lysine 635 coordinates ATP.

This sequence belongs to the class-I aminoacyl-tRNA synthetase family.

Its subcellular location is the cytoplasm. It catalyses the reaction tRNA(Leu) + L-leucine + ATP = L-leucyl-tRNA(Leu) + AMP + diphosphate. The protein is Leucine--tRNA ligase of Rhizobium etli (strain ATCC 51251 / DSM 11541 / JCM 21823 / NBRC 15573 / CFN 42).